A 254-amino-acid polypeptide reads, in one-letter code: Pre-miRNA 5'-monophosphate methyltransferase (254 aa).

A Bin3-type SAM domain is found at 34-254 (ENRLSLIPEA…DRSLLLFRRQ (221 aa)). S-adenosyl-L-methionine-binding positions include Arg-36, Asn-66, Asp-99, and 124-125 (DI).

The protein belongs to the methyltransferase superfamily.

The protein localises to the cytoplasm. The catalysed reaction is a 5'-end 5'-phospho-ribonucleoside-RNA + S-adenosyl-L-methionine = a 5'-end (5'-methylphospho)-ribonucleoside-RNA + S-adenosyl-L-homocysteine. It catalyses the reaction a 5'-end 5'-phospho-ribonucleoside-RNA + 2 S-adenosyl-L-methionine = a 5'-end (5'-bismethylphospho)-ribonucleoside-RNA + 2 S-adenosyl-L-homocysteine. O-methyltransferase that specifically monomethylates 5'-monophosphate of cytoplasmic histidyl tRNA (tRNA(His)), acting as a capping enzyme by protecting tRNA(His) from cleavage by DICER1. Also able, with less efficiently, to methylate the 5' monophosphate of a subset of pre-miRNAs, acting as a negative regulator of miRNA processing. The 5' monophosphate of pre-miRNAs is recognized by DICER1 and is required for pre-miRNAs processing: methylation at this position reduces the processing of pre-miRNAs by DICER1. Was also reported to mediate dimethylation of pre-miR-145; however dimethylation cannot be reproduced by another group which observes a monomethylation of pre-miR-145. The chain is Pre-miRNA 5'-monophosphate methyltransferase (bcdin3d) from Danio rerio (Zebrafish).